Here is a 489-residue protein sequence, read N- to C-terminus: 3-octaprenyl-4-hydroxybenzoate carboxy-lyase (489 aa).

Asn-172 provides a ligand contact to Mn(2+). Prenylated FMN-binding positions include 175–177, 189–191, and 194–195; these read IYR, RWL, and RG. Glu-238 is a Mn(2+) binding site. The Proton donor role is filled by Asp-287.

This sequence belongs to the UbiD family. In terms of assembly, homohexamer. Requires prenylated FMN as cofactor. Mn(2+) is required as a cofactor.

It is found in the cell membrane. It catalyses the reaction a 4-hydroxy-3-(all-trans-polyprenyl)benzoate + H(+) = a 2-(all-trans-polyprenyl)phenol + CO2. Its pathway is cofactor biosynthesis; ubiquinone biosynthesis. In terms of biological role, catalyzes the decarboxylation of 3-octaprenyl-4-hydroxy benzoate to 2-octaprenylphenol, an intermediate step in ubiquinone biosynthesis. This is 3-octaprenyl-4-hydroxybenzoate carboxy-lyase from Klebsiella pneumoniae (strain 342).